The following is a 1132-amino-acid chain: Ubiquitin carboxyl-terminal hydrolase 43 (1132 aa).

Residues 1–103 (MDPGVGNALG…GARPPGAQGL (103 aa)) form a disordered region. Positions 17–28 (RPRRRRSLRRLL) are enriched in basic residues. 2 stretches are compositionally biased toward low complexity: residues 29–44 (NRFL…SGDS) and 63–78 (FACA…GSPG). The USP domain occupies 101–710 (QGLKNHGNTC…GAYILFYQKR (610 aa)). Cys-110 (nucleophile) is an active-site residue. His-668 (proton acceptor) is an active-site residue. Residue Arg-746 is modified to Asymmetric dimethylarginine. 4 disordered regions span residues 839 to 891 (RRRP…TGVP), 935 to 1008 (TVMP…RGQG), 1024 to 1044 (RTVR…SDRL), and 1057 to 1106 (RESP…GEQI). Residues 941–950 (GDEKPARPEG) show a composition bias toward basic and acidic residues. Residues 958–967 (GSSQVGSQSS) show a composition bias toward low complexity. Phosphoserine is present on Ser-970. Residues 994–1006 (AAMEERAPDKDRG) show a composition bias toward basic and acidic residues.

Belongs to the peptidase C19 family.

The enzyme catalyses Thiol-dependent hydrolysis of ester, thioester, amide, peptide and isopeptide bonds formed by the C-terminal Gly of ubiquitin (a 76-residue protein attached to proteins as an intracellular targeting signal).. Functionally, may recognize and hydrolyze the peptide bond at the C-terminal Gly of ubiquitin. Involved in the processing of poly-ubiquitin precursors as well as that of ubiquitinated proteins. The sequence is that of Ubiquitin carboxyl-terminal hydrolase 43 (Usp43) from Mus musculus (Mouse).